The sequence spans 569 residues: Putative ABC transporter ATP-binding protein TTE1589 (569 aa).

ABC transporter domains are found at residues 8–248 (IIVK…IGLM) and 309–542 (IQAK…LSLK). ATP contacts are provided by residues 43–50 (GPSGAGKS) and 342–349 (GHNGSGKT).

Belongs to the ABC transporter superfamily.

It localises to the cell membrane. Functionally, probably part of an ABC transporter complex. Responsible for energy coupling to the transport system. The sequence is that of Putative ABC transporter ATP-binding protein TTE1589 from Caldanaerobacter subterraneus subsp. tengcongensis (strain DSM 15242 / JCM 11007 / NBRC 100824 / MB4) (Thermoanaerobacter tengcongensis).